We begin with the raw amino-acid sequence, 1064 residues long: DNA-directed RNA polymerase subunit beta (1064 aa).

It belongs to the RNA polymerase beta chain family. In terms of assembly, in plastids the minimal PEP RNA polymerase catalytic core is composed of four subunits: alpha, beta, beta', and beta''. When a (nuclear-encoded) sigma factor is associated with the core the holoenzyme is formed, which can initiate transcription.

The protein localises to the plastid. It localises to the chloroplast. The enzyme catalyses RNA(n) + a ribonucleoside 5'-triphosphate = RNA(n+1) + diphosphate. Functionally, DNA-dependent RNA polymerase catalyzes the transcription of DNA into RNA using the four ribonucleoside triphosphates as substrates. This is DNA-directed RNA polymerase subunit beta from Jasminum nudiflorum (Winter jasmine).